A 269-amino-acid polypeptide reads, in one-letter code: Zinc transporter ZupT (269 aa).

8 helical membrane passes run alanine 12–phenylalanine 32, leucine 41–phenylalanine 61, aspartate 75–isoleucine 95, methionine 126–alanine 146, alanine 152–isoleucine 172, valine 187–valine 207, phenylalanine 211–leucine 231, and threonine 249–phenylalanine 269. The Fe(2+) site is built by asparagine 136 and glutamate 139. Residues glutamate 139 and histidine 164 each contribute to the Zn(2+) site. Residues asparagine 165, glutamate 168, and glutamate 197 each contribute to the Fe(2+) site. Position 168 (glutamate 168) interacts with Zn(2+).

It belongs to the ZIP transporter (TC 2.A.5) family. ZupT subfamily.

The protein localises to the cell inner membrane. The catalysed reaction is Zn(2+)(in) = Zn(2+)(out). In terms of biological role, mediates zinc uptake. May also transport other divalent cations. The polypeptide is Zinc transporter ZupT (Neisseria meningitidis serogroup B (strain ATCC BAA-335 / MC58)).